A 53-amino-acid polypeptide reads, in one-letter code: uncharacterized protein (53 aa).

The chain crosses the membrane as a helical span at residues 13 to 35 (FLLHSFTFPIAHCPSFSWASFFF).

It is found in the membrane. This is an uncharacterized protein from Saccharomyces cerevisiae (strain ATCC 204508 / S288c) (Baker's yeast).